Here is a 189-residue protein sequence, read N- to C-terminus: Phosphoheptose isomerase (189 aa).

In terms of domain architecture, SIS spans 34 to 189 (VADTLKNGKK…CQAVDEAFRG (156 aa)). 49 to 51 (NGG) serves as a coordination point for substrate. Zn(2+)-binding residues include His58 and Glu62. Substrate is bound by residues Glu62, 91–92 (ND), 117–119 (STS), Ser122, and Gln169. The Zn(2+) site is built by Gln169 and His177.

This sequence belongs to the SIS family. GmhA subfamily. Homotetramer. Requires Zn(2+) as cofactor.

It is found in the cytoplasm. It catalyses the reaction 2 D-sedoheptulose 7-phosphate = D-glycero-alpha-D-manno-heptose 7-phosphate + D-glycero-beta-D-manno-heptose 7-phosphate. It functions in the pathway carbohydrate biosynthesis; D-glycero-D-manno-heptose 7-phosphate biosynthesis; D-glycero-alpha-D-manno-heptose 7-phosphate and D-glycero-beta-D-manno-heptose 7-phosphate from sedoheptulose 7-phosphate: step 1/1. Its function is as follows. Catalyzes the isomerization of sedoheptulose 7-phosphate in D-glycero-D-manno-heptose 7-phosphate. This chain is Phosphoheptose isomerase, found in Campylobacter concisus (strain 13826).